The primary structure comprises 390 residues: Aspergillopepsin-1 (390 aa).

The first 19 residues, 1–19, serve as a signal peptide directing secretion; it reads MVNTSLLAALTAYAVAVAA. Positions 20–67 are cleaved as a propeptide — activation peptide; sequence APTAPQVKGFSVNQVAVPKGVYRHPAAQLAKAYGKYHATVPTQVAAAA. The Peptidase A1 domain occupies 84–387; that stretch reads YITQVTVGDD…DASGPRLGFA (304 aa). Catalysis depends on residues Asp100 and Asp281.

The protein belongs to the peptidase A1 family. As to quaternary structure, monomer.

It localises to the secreted. The catalysed reaction is Hydrolysis of proteins with broad specificity. Generally favors hydrophobic residues in P1 and P1', but also accepts Lys in P1, which leads to activation of trypsinogen. Does not clot milk.. Inhibited by the microbial peptide pepstatin A. Its function is as follows. Secreted aspartic endopeptidase that allows assimilation of proteinaceous substrates. The scissile peptide bond is attacked by a nucleophilic water molecule activated by two aspartic residues in the active site. Shows a broad primary substrate specificity. Favors hydrophobic residues at the P1 and P1' positions, but also accepts a lysine residue in the P1 position, leading to the activation of trypsinogen and chymotrypsinogen A. Hydrolyzes myoglobin, hemoglobin and other natural proteins. Hydrolyzes equine myoglobin between positions 'Met-1' and 'Gly-2', 'Lys-43' and 'Phe-44', and 'Leu-70' and 'Thr-71'. The chain is Aspergillopepsin-1 (pepA) from Aspergillus pseudoglaucus (Eurotium repens).